Here is a 314-residue protein sequence, read N- to C-terminus: Ribosomal protein L11 methyltransferase (314 aa).

Residues Thr-163, Gly-184, Asp-206, and Asn-248 each contribute to the S-adenosyl-L-methionine site.

This sequence belongs to the methyltransferase superfamily. PrmA family.

It is found in the cytoplasm. The enzyme catalyses L-lysyl-[protein] + 3 S-adenosyl-L-methionine = N(6),N(6),N(6)-trimethyl-L-lysyl-[protein] + 3 S-adenosyl-L-homocysteine + 3 H(+). Functionally, methylates ribosomal protein L11. This is Ribosomal protein L11 methyltransferase from Lactobacillus acidophilus (strain ATCC 700396 / NCK56 / N2 / NCFM).